A 295-amino-acid chain; its full sequence is Small ribosomal subunit protein uS2 (295 aa).

The tract at residues 232–295 (RRRGTDEKPE…DEQPAAAAAE (64 aa)) is disordered. The segment covering 252 to 287 (EWERELLEEPKKSDEQPAKSDELPVKTDEQPTKSDE) has biased composition (basic and acidic residues).

This sequence belongs to the universal ribosomal protein uS2 family.

The chain is Small ribosomal subunit protein uS2 from Salinispora tropica (strain ATCC BAA-916 / DSM 44818 / JCM 13857 / NBRC 105044 / CNB-440).